Consider the following 141-residue polypeptide: Nucleoside diphosphate kinase (141 aa).

Lys-11, Phe-59, Arg-87, Thr-93, Arg-104, and Asn-114 together coordinate ATP. His-117 (pros-phosphohistidine intermediate) is an active-site residue.

Belongs to the NDK family. As to quaternary structure, homotetramer. The cofactor is Mg(2+).

The protein resides in the cytoplasm. It carries out the reaction a 2'-deoxyribonucleoside 5'-diphosphate + ATP = a 2'-deoxyribonucleoside 5'-triphosphate + ADP. The enzyme catalyses a ribonucleoside 5'-diphosphate + ATP = a ribonucleoside 5'-triphosphate + ADP. Its function is as follows. Major role in the synthesis of nucleoside triphosphates other than ATP. The ATP gamma phosphate is transferred to the NDP beta phosphate via a ping-pong mechanism, using a phosphorylated active-site intermediate. This Cupriavidus pinatubonensis (strain JMP 134 / LMG 1197) (Cupriavidus necator (strain JMP 134)) protein is Nucleoside diphosphate kinase.